The primary structure comprises 101 residues: Urease subunit beta (101 aa).

This sequence belongs to the urease beta subunit family. In terms of assembly, heterotrimer of UreA (gamma), UreB (beta) and UreC (alpha) subunits. Three heterotrimers associate to form the active enzyme.

The protein resides in the cytoplasm. It catalyses the reaction urea + 2 H2O + H(+) = hydrogencarbonate + 2 NH4(+). It functions in the pathway nitrogen metabolism; urea degradation; CO(2) and NH(3) from urea (urease route): step 1/1. The protein is Urease subunit beta of Rhizobium leguminosarum bv. trifolii (strain WSM2304).